A 169-amino-acid chain; its full sequence is Ureidoglycolate lyase (169 aa).

It belongs to the ureidoglycolate lyase family. In terms of assembly, homodimer. Ni(2+) serves as cofactor.

It carries out the reaction (S)-ureidoglycolate = urea + glyoxylate. It participates in nitrogen metabolism; (S)-allantoin degradation. Catalyzes the catabolism of the allantoin degradation intermediate (S)-ureidoglycolate, generating urea and glyoxylate. Involved in the utilization of allantoin as nitrogen source. This Brucella ovis (strain ATCC 25840 / 63/290 / NCTC 10512) protein is Ureidoglycolate lyase.